Here is a 103-residue protein sequence, read N- to C-terminus: Histone H4.1 (103 aa).

The segment covering 1-14 has biased composition (gly residues); the sequence is MSGRGKGGKGLGKG. The disordered stretch occupies residues 1–20; it reads MSGRGKGGKGLGKGGAKRHR. Lys6 is modified (N6-acetyl-N6-methyllysine; alternate). An N6-methyllysine; alternate mark is found at Lys6, Lys9, and Lys13. Lys13 is modified (N6-acetyl-N6-methyllysine; alternate). A DNA-binding region spans residues 17 to 21; the sequence is KRHRK. N6-glutaryllysine is present on Lys92.

Belongs to the histone H4 family. The nucleosome is a histone octamer containing two molecules each of H2A, H2B, H3 and H4 assembled in one H3-H4 heterotetramer and two H2A-H2B heterodimers. The octamer wraps approximately 147 bp of DNA. In terms of processing, glutarylation at Lys-92 (H4K91glu) destabilizes nucleosomes by promoting dissociation of the H2A-H2B dimers from nucleosomes.

The protein localises to the nucleus. The protein resides in the chromosome. Its function is as follows. Core component of nucleosome. Nucleosomes wrap and compact DNA into chromatin, limiting DNA accessibility to the cellular machineries which require DNA as a template. Histones thereby play a central role in transcription regulation, DNA repair, DNA replication and chromosomal stability. DNA accessibility is regulated via a complex set of post-translational modifications of histones, also called histone code, and nucleosome remodeling. The protein is Histone H4.1 (HHF1) of Eremothecium gossypii (strain ATCC 10895 / CBS 109.51 / FGSC 9923 / NRRL Y-1056) (Yeast).